A 288-amino-acid polypeptide reads, in one-letter code: UPF0761 membrane protein HS_0693 (288 aa).

The next 6 membrane-spanning stretches (helical) occupy residues 36–56, 92–112, 127–147, 176–196, 200–220, and 240–260; these read TLALVPLIMVFFSVFAAFPVF, QMSAVGIISLIVVALMLIHSI, PAIFSFAIYWLILTLGPIVIA, LLSLMPFFLTWFIFTVLYMVV, KVSIIHSAAGALIAAVFFTLG, and AMATLPIMLLWIQLSWTAVLL.

The protein belongs to the UPF0761 family.

The protein localises to the cell inner membrane. This chain is UPF0761 membrane protein HS_0693, found in Histophilus somni (strain 129Pt) (Haemophilus somnus).